We begin with the raw amino-acid sequence, 353 residues long: C2 calcium-dependent domain-containing protein 4D (353 aa).

Residues 135–191 (CRAPDSDTASSPDSSPFGSPRPGLGRRRVSRPHSLSPEKASSADTSPHSPRRAGPPT) are disordered. Low complexity predominate over residues 140–150 (SDTASSPDSSP). A C2 domain is found at 217 to 343 (RGGQLRLSTE…PPLGGGLGPG (127 aa)).

The protein is C2 calcium-dependent domain-containing protein 4D (C2CD4D) of Homo sapiens (Human).